Reading from the N-terminus, the 84-residue chain is UPF0473 protein CLI_2624 (84 aa).

It belongs to the UPF0473 family.

This is UPF0473 protein CLI_2624 from Clostridium botulinum (strain Langeland / NCTC 10281 / Type F).